The primary structure comprises 119 residues: Iron-sulfur cluster insertion protein ErpA (119 aa).

Positions 47, 111, and 113 each coordinate iron-sulfur cluster.

It belongs to the HesB/IscA family. Homodimer. The cofactor is iron-sulfur cluster.

Functionally, required for insertion of 4Fe-4S clusters for at least IspG. In Alcanivorax borkumensis (strain ATCC 700651 / DSM 11573 / NCIMB 13689 / SK2), this protein is Iron-sulfur cluster insertion protein ErpA.